A 575-amino-acid polypeptide reads, in one-letter code: MRMSRLFAPTLREIPAEAEVISHQLLLRAGFIRRSSAGVYHYLPLGQRVLQRIMAIVREEMNAAGGQELLMPIIQPAEIWLQSGRWHVYGDELFRLKDRHQRDFCLSPTHEESITDLVKNNVSSYRDLPMLLYHITNKYRDERRPRFGLMRGREFIMKDLYSFDRDEAGLHESYMKMYQAYVNIFRRCGLTFRPVEADPGAIGGTGGSHEFMVLAESGEAEIVYCDACDYAANTEKAECKPQVTPGLPPLPVEQVATPDQKTIEEVCNFLKVAPADTIKTMVFRADDDLVMALIRGDREINEVKLKNLLGCLDLRMATEEECREVSPGGAGFLGPVGIEEIPIYADPEVMAMTRAVAGANAPGAHLIHVCPGRDFTVIATADLRLVQAGEPCPQCGAPLKKARGIEVGQVFKLGTKYSKALNCTFLDEKGQENLMVMGCYGVGVSRTMAAAIEQNHDDNGIVWPMAIAPFQVLVVPVSNKDAAQMEAAEAIYKELIAKGVDTLLDDRPERAGVKFKDADLIGIPVRITVGNKLASDGVVEVKLRRGGEQFTASREDVVAQVQALIREQMEATPVS.

Belongs to the class-II aminoacyl-tRNA synthetase family. ProS type 1 subfamily. Homodimer.

It localises to the cytoplasm. It catalyses the reaction tRNA(Pro) + L-proline + ATP = L-prolyl-tRNA(Pro) + AMP + diphosphate. Functionally, catalyzes the attachment of proline to tRNA(Pro) in a two-step reaction: proline is first activated by ATP to form Pro-AMP and then transferred to the acceptor end of tRNA(Pro). As ProRS can inadvertently accommodate and process non-cognate amino acids such as alanine and cysteine, to avoid such errors it has two additional distinct editing activities against alanine. One activity is designated as 'pretransfer' editing and involves the tRNA(Pro)-independent hydrolysis of activated Ala-AMP. The other activity is designated 'posttransfer' editing and involves deacylation of mischarged Ala-tRNA(Pro). The misacylated Cys-tRNA(Pro) is not edited by ProRS. This is Proline--tRNA ligase from Heliobacterium modesticaldum (strain ATCC 51547 / Ice1).